A 355-amino-acid polypeptide reads, in one-letter code: UDP-N-acetylglucosamine--N-acetylmuramyl-(pentapeptide) pyrophosphoryl-undecaprenol N-acetylglucosamine transferase (355 aa).

UDP-N-acetyl-alpha-D-glucosamine is bound by residues 15–17 (TGG), N127, R163, S191, I244, 263–268 (ALTVSE), and Q288.

It belongs to the glycosyltransferase 28 family. MurG subfamily.

It localises to the cell inner membrane. The enzyme catalyses di-trans,octa-cis-undecaprenyl diphospho-N-acetyl-alpha-D-muramoyl-L-alanyl-D-glutamyl-meso-2,6-diaminopimeloyl-D-alanyl-D-alanine + UDP-N-acetyl-alpha-D-glucosamine = di-trans,octa-cis-undecaprenyl diphospho-[N-acetyl-alpha-D-glucosaminyl-(1-&gt;4)]-N-acetyl-alpha-D-muramoyl-L-alanyl-D-glutamyl-meso-2,6-diaminopimeloyl-D-alanyl-D-alanine + UDP + H(+). It functions in the pathway cell wall biogenesis; peptidoglycan biosynthesis. Cell wall formation. Catalyzes the transfer of a GlcNAc subunit on undecaprenyl-pyrophosphoryl-MurNAc-pentapeptide (lipid intermediate I) to form undecaprenyl-pyrophosphoryl-MurNAc-(pentapeptide)GlcNAc (lipid intermediate II). This Photorhabdus laumondii subsp. laumondii (strain DSM 15139 / CIP 105565 / TT01) (Photorhabdus luminescens subsp. laumondii) protein is UDP-N-acetylglucosamine--N-acetylmuramyl-(pentapeptide) pyrophosphoryl-undecaprenol N-acetylglucosamine transferase.